We begin with the raw amino-acid sequence, 251 residues long: Ubiquinone/menaquinone biosynthesis C-methyltransferase UbiE (251 aa).

Residues Thr74, Asp95, and 123 to 124 each bind S-adenosyl-L-methionine; that span reads NA.

It belongs to the class I-like SAM-binding methyltransferase superfamily. MenG/UbiE family.

The enzyme catalyses a 2-demethylmenaquinol + S-adenosyl-L-methionine = a menaquinol + S-adenosyl-L-homocysteine + H(+). The catalysed reaction is a 2-methoxy-6-(all-trans-polyprenyl)benzene-1,4-diol + S-adenosyl-L-methionine = a 5-methoxy-2-methyl-3-(all-trans-polyprenyl)benzene-1,4-diol + S-adenosyl-L-homocysteine + H(+). The protein operates within quinol/quinone metabolism; menaquinone biosynthesis; menaquinol from 1,4-dihydroxy-2-naphthoate: step 2/2. It participates in cofactor biosynthesis; ubiquinone biosynthesis. Its function is as follows. Methyltransferase required for the conversion of demethylmenaquinol (DMKH2) to menaquinol (MKH2) and the conversion of 2-polyprenyl-6-methoxy-1,4-benzoquinol (DDMQH2) to 2-polyprenyl-3-methyl-6-methoxy-1,4-benzoquinol (DMQH2). The sequence is that of Ubiquinone/menaquinone biosynthesis C-methyltransferase UbiE from Shewanella sediminis (strain HAW-EB3).